Reading from the N-terminus, the 277-residue chain is Large ribosomal subunit protein uL2 (277 aa).

The interval 222–277 is disordered; it reads GVTMNPVDHPHGGGEGRTSGGRHPVTPWGKPTKGKKTRSNKSTNKFILISRHKRKK.

The protein belongs to the universal ribosomal protein uL2 family. Part of the 50S ribosomal subunit. Forms a bridge to the 30S subunit in the 70S ribosome.

In terms of biological role, one of the primary rRNA binding proteins. Required for association of the 30S and 50S subunits to form the 70S ribosome, for tRNA binding and peptide bond formation. It has been suggested to have peptidyltransferase activity; this is somewhat controversial. Makes several contacts with the 16S rRNA in the 70S ribosome. The chain is Large ribosomal subunit protein uL2 from Rhodopseudomonas palustris (strain BisB18).